The following is a 176-amino-acid chain: Large ribosomal subunit protein uL6 (176 aa).

Belongs to the universal ribosomal protein uL6 family. As to quaternary structure, part of the 50S ribosomal subunit.

In terms of biological role, this protein binds to the 23S rRNA, and is important in its secondary structure. It is located near the subunit interface in the base of the L7/L12 stalk, and near the tRNA binding site of the peptidyltransferase center. In Burkholderia vietnamiensis (strain G4 / LMG 22486) (Burkholderia cepacia (strain R1808)), this protein is Large ribosomal subunit protein uL6.